We begin with the raw amino-acid sequence, 511 residues long: Lysine--tRNA ligase (511 aa).

The disordered stretch occupies residues 1–21; that stretch reads MHTEKDPNKNTPEQQTPISLN. Residues 9–21 are compositionally biased toward polar residues; the sequence is KNTPEQQTPISLN. Glu422 and Glu429 together coordinate Mg(2+).

Belongs to the class-II aminoacyl-tRNA synthetase family. In terms of assembly, homodimer. The cofactor is Mg(2+).

The protein localises to the cytoplasm. It carries out the reaction tRNA(Lys) + L-lysine + ATP = L-lysyl-tRNA(Lys) + AMP + diphosphate. This is Lysine--tRNA ligase from Pelodictyon phaeoclathratiforme (strain DSM 5477 / BU-1).